Reading from the N-terminus, the 131-residue chain is Small ribosomal subunit protein uS12 (131 aa).

Residues 1 to 32 (MPTFSQLVRKGRTAPRYKTASPALQGSPQRRG) form a disordered region. Asp89 is modified (3-methylthioaspartic acid). Residues 110-131 (RKQGRSKYGAKRAKGGAAAGKK) are disordered. Positions 111–131 (KQGRSKYGAKRAKGGAAAGKK) are enriched in basic residues.

Belongs to the universal ribosomal protein uS12 family. Part of the 30S ribosomal subunit. Contacts proteins S8 and S17. May interact with IF1 in the 30S initiation complex.

With S4 and S5 plays an important role in translational accuracy. In terms of biological role, interacts with and stabilizes bases of the 16S rRNA that are involved in tRNA selection in the A site and with the mRNA backbone. Located at the interface of the 30S and 50S subunits, it traverses the body of the 30S subunit contacting proteins on the other side and probably holding the rRNA structure together. The combined cluster of proteins S8, S12 and S17 appears to hold together the shoulder and platform of the 30S subunit. The sequence is that of Small ribosomal subunit protein uS12 from Acidobacterium capsulatum (strain ATCC 51196 / DSM 11244 / BCRC 80197 / JCM 7670 / NBRC 15755 / NCIMB 13165 / 161).